Here is a 277-residue protein sequence, read N- to C-terminus: Phosphate import ATP-binding protein PstB (277 aa).

The ABC transporter domain occupies 31–272 (IEVPGLSLYY…PAKKQTEDYI (242 aa)). Residue 63–70 (GPSGCGKS) coordinates ATP.

The protein belongs to the ABC transporter superfamily. Phosphate importer (TC 3.A.1.7) family. In terms of assembly, the complex is composed of two ATP-binding proteins (PstB), two transmembrane proteins (PstC and PstA) and a solute-binding protein (PstS).

The protein resides in the cell inner membrane. The catalysed reaction is phosphate(out) + ATP + H2O = ADP + 2 phosphate(in) + H(+). Part of the ABC transporter complex PstSACB involved in phosphate import. Responsible for energy coupling to the transport system. This chain is Phosphate import ATP-binding protein PstB, found in Pseudomonas fluorescens (strain ATCC BAA-477 / NRRL B-23932 / Pf-5).